A 318-amino-acid polypeptide reads, in one-letter code: Ribose-phosphate pyrophosphokinase 2 (318 aa).

Residue 96–101 (RQDKKD) coordinates ATP. Mg(2+) is bound by residues aspartate 128, histidine 130, aspartate 139, and aspartate 143. Histidine 130 contacts ATP. The binding of phosphoribosylpyrophosphate stretch occupies residues 212–227 (KDRVAILVDDMADTCG).

The protein belongs to the ribose-phosphate pyrophosphokinase family. As to quaternary structure, homodimer. The active form is probably a hexamer composed of 3 homodimers. It depends on Mg(2+) as a cofactor.

It catalyses the reaction D-ribose 5-phosphate + ATP = 5-phospho-alpha-D-ribose 1-diphosphate + AMP + H(+). Its pathway is metabolic intermediate biosynthesis; 5-phospho-alpha-D-ribose 1-diphosphate biosynthesis; 5-phospho-alpha-D-ribose 1-diphosphate from D-ribose 5-phosphate (route I): step 1/1. With respect to regulation, activated by magnesium and inorganic phosphate. Competitively or non-competitively inhibited by ADP, 2,3-bisphosphoglyceride or GDP. In terms of biological role, catalyzes the synthesis of phosphoribosylpyrophosphate (PRPP) that is essential for nucleotide synthesis. The sequence is that of Ribose-phosphate pyrophosphokinase 2 (Prps2) from Mus musculus (Mouse).